Consider the following 111-residue polypeptide: Phosphoribosyl-AMP cyclohydrolase (111 aa).

Aspartate 80 serves as a coordination point for Mg(2+). Cysteine 81 contributes to the Zn(2+) binding site. The Mg(2+) site is built by aspartate 82 and aspartate 84. Zn(2+)-binding residues include cysteine 97 and cysteine 104.

This sequence belongs to the PRA-CH family. As to quaternary structure, homodimer. Requires Mg(2+) as cofactor. The cofactor is Zn(2+).

The protein localises to the cytoplasm. The enzyme catalyses 1-(5-phospho-beta-D-ribosyl)-5'-AMP + H2O = 1-(5-phospho-beta-D-ribosyl)-5-[(5-phospho-beta-D-ribosylamino)methylideneamino]imidazole-4-carboxamide. Its pathway is amino-acid biosynthesis; L-histidine biosynthesis; L-histidine from 5-phospho-alpha-D-ribose 1-diphosphate: step 3/9. Catalyzes the hydrolysis of the adenine ring of phosphoribosyl-AMP. The protein is Phosphoribosyl-AMP cyclohydrolase of Mycobacterium ulcerans (strain Agy99).